A 205-amino-acid polypeptide reads, in one-letter code: Beta-crystallin B2 (205 aa).

Position 2 is an N-acetylalanine (alanine 2). Residues alanine 2–serine 16 form an N-terminal arm region. Beta/gamma crystallin 'Greek key' domains lie at serine 17–serine 56 and glycine 57–lysine 101. Positions valine 102 to glutamate 106 are connecting peptide. Beta/gamma crystallin 'Greek key' domains follow at residues histidine 107–serine 148 and glycine 149–arginine 191. The tract at residues methionine 193–asparagine 205 is C-terminal arm.

The protein belongs to the beta/gamma-crystallin family. In terms of assembly, homo/heterodimer, or complexes of higher-order. The structure of beta-crystallin oligomers seems to be stabilized through interactions between the N-terminal arms. Post-translationally, the N-terminus is blocked.

Crystallins are the dominant structural components of the vertebrate eye lens. The polypeptide is Beta-crystallin B2 (Aquarana catesbeiana (American bullfrog)).